Here is a 246-residue protein sequence, read N- to C-terminus: 4-hydroxy-tetrahydrodipicolinate reductase (246 aa).

NAD(+) contacts are provided by residues Gly-8–Met-13, Gly-75–Thr-77, and Ala-99–Tyr-102. The active-site Proton donor/acceptor is the His-132. His-133 is a binding site for (S)-2,3,4,5-tetrahydrodipicolinate. The active-site Proton donor is the Lys-136. Gly-142–Thr-143 serves as a coordination point for (S)-2,3,4,5-tetrahydrodipicolinate.

It belongs to the DapB family.

It is found in the cytoplasm. It catalyses the reaction (S)-2,3,4,5-tetrahydrodipicolinate + NAD(+) + H2O = (2S,4S)-4-hydroxy-2,3,4,5-tetrahydrodipicolinate + NADH + H(+). It carries out the reaction (S)-2,3,4,5-tetrahydrodipicolinate + NADP(+) + H2O = (2S,4S)-4-hydroxy-2,3,4,5-tetrahydrodipicolinate + NADPH + H(+). It participates in amino-acid biosynthesis; L-lysine biosynthesis via DAP pathway; (S)-tetrahydrodipicolinate from L-aspartate: step 4/4. Its function is as follows. Catalyzes the conversion of 4-hydroxy-tetrahydrodipicolinate (HTPA) to tetrahydrodipicolinate. The chain is 4-hydroxy-tetrahydrodipicolinate reductase from Akkermansia muciniphila (strain ATCC BAA-835 / DSM 22959 / JCM 33894 / BCRC 81048 / CCUG 64013 / CIP 107961 / Muc).